A 356-amino-acid chain; its full sequence is Guanine nucleotide-binding protein alpha-17 subunit (356 aa).

A lipid anchor (N-myristoyl glycine) is attached at Gly-2. Cys-4 carries S-palmitoyl cysteine lipidation. The G-alpha domain occupies 32–356 (SIVKLLLLGA…QKNLQKAGMM (325 aa)). The tract at residues 35–48 (KLLLLGAGECGKST) is G1 motif. Residues 40 to 47 (GAGECGKS), 177 to 183 (LYSRVAT), 202 to 206 (DVGGQ), 271 to 274 (NKKD), and Ala-328 each bind GTP. Mg(2+) contacts are provided by Ser-47 and Thr-183. Residues 175 to 183 (DILYSRVAT) form a G2 motif region. The tract at residues 198–207 (FRVFDVGGQR) is G3 motif. Residues 267–274 (ILFMNKKD) are G4 motif. The segment at 326-331 (TCATDT) is G5 motif.

This sequence belongs to the G-alpha family. As to quaternary structure, g proteins are composed of 3 units; alpha, beta and gamma. The alpha chain contains the guanine nucleotide binding site. Expressed in sensory neurons in the head and tail. Expressed in amphid AWC neurons, to a lesser extent in AWB and weakly in AWA, ASH and ADF neurons (head sensory neurons). Expressed in phasmid PHA and PHB neurons (tail sensory neurons).

The protein localises to the cell projection. It is found in the cilium. The protein resides in the dendrite. Its function is as follows. Guanine nucleotide-binding proteins (G proteins) are involved as modulators or transducers in various transmembrane signaling systems. This specific G-alpha subunit plays an important role in olfaction and in cilia morphogenesis. Involved in chemotactic responses to attractants diacetyl, pyrazine, 2,4,5-trimethylthiazole, benzaldehyde, isoamyl alcohol, butanone and 2,3-pentanedione. Displays a redundant function with gpa-3 in chemotactic responses. Plays a role in the avoidance response to the noxious chemical quinine in ASH sensory neurons. Involved in avoidance responses to copper, sodium dodecyl sulfate and linoleic acid. Involved in osmotic avoidance and mechanosensory responses. Involved in specifying fan-like morphology of cilia of head sensory neurons AWC. Plays a role in the detection of preferred food sources by mediating the recognition of food odors in olfactory sensory neurons. The protein is Guanine nucleotide-binding protein alpha-17 subunit of Caenorhabditis elegans.